We begin with the raw amino-acid sequence, 361 residues long: Chorismate synthase (361 aa).

R47 serves as a coordination point for NADP(+). FMN contacts are provided by residues 124–126 (RAS), G286, 301–305 (KPTAT), and R327.

This sequence belongs to the chorismate synthase family. Homotetramer. The cofactor is FMNH2.

It carries out the reaction 5-O-(1-carboxyvinyl)-3-phosphoshikimate = chorismate + phosphate. It participates in metabolic intermediate biosynthesis; chorismate biosynthesis; chorismate from D-erythrose 4-phosphate and phosphoenolpyruvate: step 7/7. In terms of biological role, catalyzes the anti-1,4-elimination of the C-3 phosphate and the C-6 proR hydrogen from 5-enolpyruvylshikimate-3-phosphate (EPSP) to yield chorismate, which is the branch point compound that serves as the starting substrate for the three terminal pathways of aromatic amino acid biosynthesis. This reaction introduces a second double bond into the aromatic ring system. This is Chorismate synthase from Akkermansia muciniphila (strain ATCC BAA-835 / DSM 22959 / JCM 33894 / BCRC 81048 / CCUG 64013 / CIP 107961 / Muc).